Reading from the N-terminus, the 108-residue chain is uncharacterized protein (108 aa).

It belongs to the baculoviridae 11 kDa protein family.

This is an uncharacterized protein from Orgyia pseudotsugata (Douglas-fir tussock moth).